Reading from the N-terminus, the 142-residue chain is Large ribosomal subunit protein uL13 (142 aa).

The protein belongs to the universal ribosomal protein uL13 family. In terms of assembly, part of the 50S ribosomal subunit.

This protein is one of the early assembly proteins of the 50S ribosomal subunit, although it is not seen to bind rRNA by itself. It is important during the early stages of 50S assembly. This is Large ribosomal subunit protein uL13 from Akkermansia muciniphila (strain ATCC BAA-835 / DSM 22959 / JCM 33894 / BCRC 81048 / CCUG 64013 / CIP 107961 / Muc).